Reading from the N-terminus, the 1243-residue chain is Protein MMS22-like (1243 aa).

The protein belongs to the MMS22 family. MMS22L subfamily. In terms of assembly, component of the MMS22L-TONSL complex, a complex at least composed of MMS22L and TONSL/NFKBIL2. Interacts with RAD51; interaction is direct. Degraded by the ubiquitin-proteasome system upon replication stress.

The protein localises to the nucleus. It is found in the chromosome. In terms of biological role, component of the MMS22L-TONSL complex, a complex that promotes homologous recombination-mediated repair of double-strand breaks (DSBs) at stalled or collapsed replication forks. The MMS22L-TONSL complex is required to maintain genome integrity during DNA replication. It mediates the assembly of RAD51 filaments on single-stranded DNA (ssDNA): the MMS22L-TONSL complex is recruited to DSBs following histone replacement by histone chaperones and eviction of the replication protein A complex (RPA/RP-A) from DSBs. Following recruitment to DSBs, the TONSL-MMS22L complex promotes recruitment of RAD51 filaments and subsequent homologous recombination. Within the complex, MMS22L acts by binding ssDNA. The chain is Protein MMS22-like from Homo sapiens (Human).